Consider the following 294-residue polypeptide: Release factor glutamine methyltransferase (294 aa).

Residues Glu148 and Asn201 each coordinate S-adenosyl-L-methionine. 201–204 is a binding site for substrate; that stretch reads NPPY.

It belongs to the protein N5-glutamine methyltransferase family. PrmC subfamily.

It carries out the reaction L-glutaminyl-[peptide chain release factor] + S-adenosyl-L-methionine = N(5)-methyl-L-glutaminyl-[peptide chain release factor] + S-adenosyl-L-homocysteine + H(+). Functionally, methylates the class 1 translation termination release factors RF1/PrfA and RF2/PrfB on the glutamine residue of the universally conserved GGQ motif. This is Release factor glutamine methyltransferase from Bifidobacterium longum (strain NCC 2705).